Here is a 307-residue protein sequence, read N- to C-terminus: Nicotinamide/nicotinic acid mononucleotide adenylyltransferase 2 (307 aa).

Residues S16 and F17 each coordinate NAD(+). Position 24 (H24) interacts with ATP. The NAD(+) site is built by W92 and T95. 2 S-palmitoyl cysteine lipidation sites follow: C164 and C165. Residues G200, D202, L212, W213, and R232 each contribute to the NAD(+) site. 271–274 contacts ATP; that stretch reads TKSR.

This sequence belongs to the eukaryotic NMN adenylyltransferase family. As to quaternary structure, monomer. Mg(2+) is required as a cofactor. Post-translationally, degraded in response to injured neurite. Degradation is caused by polyubiquitination by MYCBP2 after recognition by FBXO45. In terms of processing, palmitoylated; palmitoylation is required for membrane association.

It is found in the golgi apparatus membrane. Its subcellular location is the cytoplasmic vesicle membrane. It localises to the cytoplasm. The protein resides in the cell projection. The protein localises to the axon. The catalysed reaction is beta-nicotinamide D-ribonucleotide + ATP + H(+) = diphosphate + NAD(+). The enzyme catalyses nicotinate beta-D-ribonucleotide + ATP + H(+) = deamido-NAD(+) + diphosphate. Its pathway is cofactor biosynthesis; NAD(+) biosynthesis; NAD(+) from nicotinamide D-ribonucleotide: step 1/1. It functions in the pathway cofactor biosynthesis; NAD(+) biosynthesis; deamido-NAD(+) from nicotinate D-ribonucleotide: step 1/1. Its activity is regulated as follows. Inhibited by P1-(adenosine-5')-P3-(nicotinamide-riboside-5')-triphosphate (Np3AD) and P1-(adenosine-5')-P4-(nicotinamide-riboside-5')-tetraphosphate (Np4AD). Functionally, nicotinamide/nicotinate-nucleotide adenylyltransferase that acts as an axon maintenance factor. Axon survival factor required for the maintenance of healthy axons: acts by delaying Wallerian axon degeneration, an evolutionarily conserved process that drives the loss of damaged axons. Catalyzes the formation of NAD(+) from nicotinamide mononucleotide (NMN) and ATP. Can also use the deamidated form; nicotinic acid mononucleotide (NaMN) as substrate but with a lower efficiency. Cannot use triazofurin monophosphate (TrMP) as substrate. Also catalyzes the reverse reaction, i.e. the pyrophosphorolytic cleavage of NAD(+). For the pyrophosphorolytic activity prefers NAD(+), NADH and NaAD as substrates and degrades nicotinic acid adenine dinucleotide phosphate (NHD) less effectively. Fails to cleave phosphorylated dinucleotides NADP(+), NADPH and NaADP(+). Also acts as an activator of ADP-ribosylation by supporting the catalytic activity of PARP16 and promoting mono-ADP-ribosylation of ribosomes by PARP16. May be involved in the maintenance of axonal integrity. The chain is Nicotinamide/nicotinic acid mononucleotide adenylyltransferase 2 (Nmnat2) from Rattus norvegicus (Rat).